The primary structure comprises 228 residues: Protein boule (228 aa).

The region spanning 33–110 is the RRM domain; it reads NRIFVGGISG…RKLNIAPAIK (78 aa). In terms of domain architecture, DAZ spans 151 to 178; that stretch reads PAAGVPAIYPPSAMQYQPFYQYYSVPMN. Residues 193 to 214 show a composition bias toward low complexity; that stretch reads PLLHSPTSNPHSPHSQSHPQSP. The segment at 193-228 is disordered; the sequence is PLLHSPTSNPHSPHSQSHPQSPCWSIEDLRDTLPRV. The span at 219–228 shows a compositional bias: basic and acidic residues; it reads EDLRDTLPRV.

It belongs to the RRM DAZ family. As to quaternary structure, interacts with the translational regulator orb2. Testis specific.

The protein localises to the nucleus. The protein resides in the cytoplasm. Functionally, RNA-binding protein that plays a central role in spermatogenesis. Required for meiotic entry and germline differentiation, at the transition between G2 and M phases of meiosis I. Acts by regulating translation of specific mRNAs, possibly by binding to their 3'-UTR. Essential for translation of twine (twe) mRNA. Required for the expression of various genes such as CG6784, CG17210, CG15841 scpr-B, scpr-C, and rho-6. The sequence is that of Protein boule (bol) from Drosophila melanogaster (Fruit fly).